The following is a 368-amino-acid chain: 1-aminocyclopropane-1-carboxylate oxidase (368 aa).

One can recognise a Fe2OG dioxygenase domain in the interval 177–307 (PFILMGLLHY…RFSIPFFLDP (131 aa)). The disordered stretch occupies residues 191-226 (HQEQEEEQEDDESNNGGKKSPNPDESKKPEVEKFGT). Positions 194 to 203 (QEEEQEDDES) are enriched in acidic residues. Residues 211-223 (PNPDESKKPEVEK) show a composition bias toward basic and acidic residues. Histidine 229, aspartate 231, and histidine 287 together coordinate Fe cation. Residue arginine 298 coordinates 2-oxoglutarate.

It belongs to the iron/ascorbate-dependent oxidoreductase family. The cofactor is Fe(2+).

It carries out the reaction 1-aminocyclopropane-1-carboxylate + L-ascorbate + O2 = ethene + L-dehydroascorbate + hydrogen cyanide + CO2 + 2 H2O. It functions in the pathway alkene biosynthesis; ethylene biosynthesis via S-adenosyl-L-methionine; ethylene from S-adenosyl-L-methionine: step 2/2. Functionally, involved in ethylene biosynthesis. Overexpression induces overproduction of ethylene. In Dictyostelium discoideum (Social amoeba), this protein is 1-aminocyclopropane-1-carboxylate oxidase (aco).